The primary structure comprises 296 residues: 4-hydroxy-tetrahydrodipicolinate synthase (296 aa).

T49 contacts pyruvate. Residue Y137 is the Proton donor/acceptor of the active site. K165 functions as the Schiff-base intermediate with substrate in the catalytic mechanism. I207 contacts pyruvate.

Belongs to the DapA family. In terms of assembly, homotetramer; dimer of dimers.

The protein localises to the cytoplasm. The catalysed reaction is L-aspartate 4-semialdehyde + pyruvate = (2S,4S)-4-hydroxy-2,3,4,5-tetrahydrodipicolinate + H2O + H(+). The protein operates within amino-acid biosynthesis; L-lysine biosynthesis via DAP pathway; (S)-tetrahydrodipicolinate from L-aspartate: step 3/4. Functionally, catalyzes the condensation of (S)-aspartate-beta-semialdehyde [(S)-ASA] and pyruvate to 4-hydroxy-tetrahydrodipicolinate (HTPA). The protein is 4-hydroxy-tetrahydrodipicolinate synthase of Rhodopseudomonas palustris (strain BisA53).